A 300-amino-acid chain; its full sequence is N-acetylmuramic acid 6-phosphate etherase (300 aa).

One can recognise an SIS domain in the interval 57–220; sequence IAVAFQCGGR…TTGAMIRTGK (164 aa). Glutamate 85 (proton donor) is an active-site residue. The active site involves glutamate 116.

Belongs to the GCKR-like family. MurNAc-6-P etherase subfamily. In terms of assembly, homodimer.

It carries out the reaction N-acetyl-D-muramate 6-phosphate + H2O = N-acetyl-D-glucosamine 6-phosphate + (R)-lactate. Its pathway is amino-sugar metabolism; 1,6-anhydro-N-acetylmuramate degradation. The protein operates within amino-sugar metabolism; N-acetylmuramate degradation. It functions in the pathway cell wall biogenesis; peptidoglycan recycling. Its function is as follows. Specifically catalyzes the cleavage of the D-lactyl ether substituent of MurNAc 6-phosphate, producing GlcNAc 6-phosphate and D-lactate. Together with AnmK, is also required for the utilization of anhydro-N-acetylmuramic acid (anhMurNAc) either imported from the medium or derived from its own cell wall murein, and thus plays a role in cell wall recycling. This is N-acetylmuramic acid 6-phosphate etherase from Aliivibrio salmonicida (strain LFI1238) (Vibrio salmonicida (strain LFI1238)).